Reading from the N-terminus, the 345-residue chain is Serine/threonine-protein kinase US3 homolog (345 aa).

Residues F49–Y334 form the Protein kinase domain. ATP contacts are provided by residues F55–T63 and K78. D162 serves as the catalytic Proton acceptor.

It belongs to the protein kinase superfamily. Ser/Thr protein kinase family. Post-translationally, phosphorylated by UL13 homolog; this phosphorylation regulates subsequent phosphorylation of UL31 and UL34 homologs by US3. Autophosphorylated.

The protein localises to the host cytoplasm. It is found in the host nucleus. It carries out the reaction L-seryl-[protein] + ATP = O-phospho-L-seryl-[protein] + ADP + H(+). The enzyme catalyses L-threonyl-[protein] + ATP = O-phospho-L-threonyl-[protein] + ADP + H(+). In terms of biological role, multifunctional serine/threonine kinase that plays a role in several processes including egress of virus particles from the nucleus, modulation of the actin cytoskeleton and inhibition of apoptosis. Phosphorylates UL31 and UL34 homologs, two critical regulators of capsid budding from nucleus to endoplasmic reticulum, thereby facilitating virion egress. Modulates and redistributes host components of the nuclear envelope, including LMNA, emerin/EMD and the nuclear matrix protein MATR3. Phosphorylates envelope glycoprotein B (gB), probably to direct it to the cell surface. Promotes virus intracellular spread by restructuring host cell cytoskeleton. Blocks host apoptosis to extend cell survival and allow efficient viral replication. Promotes viral gene expression by phosphorylating host HDAC2 to reduce viral genome silencing. The sequence is that of Serine/threonine-protein kinase US3 homolog (US2) from Chlorocebus aethiops (Green monkey).